The chain runs to 284 residues: MASLRDIKSRIASNKKMSQITKAQEMVSASKLNRAENKAKSFVPYMEKMQEVVADIAVGYTGKHPMMSSRPVKRTGYLVITADRGLAGAFNANVLRKAYQRIQERHQSKDEYAVIAVGRMGRDFFKKRGIPVISEMTGIRDEVTFSEIKDLANSTVQMYIDETFDELYLFYNHFVSAISQEVTEKKLLPLTDIAPNKKKTSFEFEPDEEEILEVLLPQYAESLIFGALLDSKASEHAARMTAMRNATDNAKEIIADLELSYNRARQASITQEITEIVGGAAALE.

It belongs to the ATPase gamma chain family. In terms of assembly, F-type ATPases have 2 components, CF(1) - the catalytic core - and CF(0) - the membrane proton channel. CF(1) has five subunits: alpha(3), beta(3), gamma(1), delta(1), epsilon(1). CF(0) has three main subunits: a, b and c.

Its subcellular location is the cell membrane. Produces ATP from ADP in the presence of a proton gradient across the membrane. The gamma chain is believed to be important in regulating ATPase activity and the flow of protons through the CF(0) complex. This Bacillus licheniformis (strain ATCC 14580 / DSM 13 / JCM 2505 / CCUG 7422 / NBRC 12200 / NCIMB 9375 / NCTC 10341 / NRRL NRS-1264 / Gibson 46) protein is ATP synthase gamma chain.